The primary structure comprises 1492 residues: Cystic fibrosis transmembrane conductance regulator (1492 aa).

At 1-78 the chain is on the cytoplasmic side; the sequence is MQRSPIEKAN…KLVNALRRCF (78 aa). Residues 79 to 99 traverse the membrane as a helical segment; it reads FWRFLFYGILLYFVEFTKAVQ. In terms of domain architecture, ABC transmembrane type-1 1 spans 82–366; that stretch reads FLFYGILLYF…SAIQTWYDSL (285 aa). The Extracellular segment spans residues 100–123; it reads PLCLGRIIASYNAKNTYEREIAYY. A helical transmembrane segment spans residues 124-147; that stretch reads LALGLCLLFVVRTLFLHPAVFGLQ. Topologically, residues 148–196 are cytoplasmic; that stretch reads HLGMQMRIALFSLIYKKILKMSSRVLDKIDTGQLVSLLSNNLNKFDEGV. The helical transmembrane segment at 197–217 threads the bilayer; the sequence is AVAHFVWIAPVQVVLLMGLIW. Over 218–223 the chain is Extracellular; that stretch reads NELTEF. Residues 224–244 form a helical membrane-spanning segment; that stretch reads VFCGLGFLIMLALFQAWLGKK. The Cytoplasmic segment spans residues 245 to 299; it reads MMQYRDKRAGKINERLAITSEIIDNIQSVKVYCWEDAMEKIIDDIRQVELKLTRK. A helical membrane pass occupies residues 300–320; that stretch reads VAYCRYFSSSAFFFSGFFVVF. Over 321-340 the chain is Extracellular; that stretch reads LSVVPYAFIHTIKLRRIFTT. A helical transmembrane segment spans residues 341–359; that stretch reads ISYNIVLRMTVTRQFPSAI. Topologically, residues 360–867 are cytoplasmic; the sequence is QTWYDSLGAI…YLRYVTTNRN (508 aa). ATP contacts are provided by residues tryptophan 402, serine 435, 459–466, and glutamine 494; that span reads GSTGSGKS. Residues 424 to 647 enclose the ABC transporter 1 domain; it reads NGDDGLFFSN…KPDFSSQLLG (224 aa). A disordered R region region spans residues 655–840; the sequence is SAERRNSILT…EEINEEDLKE (186 aa). A helical membrane pass occupies residues 868–888; the sequence is LVFVLILCLVIFLAEVAASLA. Residues 868–1169 form the ABC transmembrane type-1 2 domain; it reads LVFVLILCLV…AVNSSIDVDG (302 aa). Residues 889-932 are Extracellular-facing; it reads GLWIISGLAINTGSQTNDTSTDLSHLSVFSKFITNGSHYYIFYI. Asparagine 905 and asparagine 923 each carry an N-linked (GlcNAc...) asparagine glycan. The discontinuously helical transmembrane segment at 933–953 threads the bilayer; sequence YVGLADSFLALGVIRGLPLVH. Residues 954-1004 lie on the Cytoplasmic side of the membrane; that stretch reads TLVTVSKDLHKQMLHSVLQGPMTAFNKMKAGRILNRFIKDTAIIDDMLPLT. The chain crosses the membrane as a helical span at residues 1005-1025; it reads VFDFVQLILIVVGAICVVSVL. The Extracellular segment spans residues 1026–1027; the sequence is QP. Residues 1028 to 1048 traverse the membrane as a helical segment; the sequence is YTLLAAIPVAVIFIMLRAYFL. The Cytoplasmic segment spans residues 1049-1109; that stretch reads RTSQQLKQLE…TANWFLYLST (61 aa). Residues 1110 to 1130 form a helical membrane-spanning segment; sequence LRWFQMRIDIVFVLFFIAVTF. Topologically, residues 1131–1144 are extracellular; it reads IAIATHDVGEGQVG. The helical transmembrane segment at 1145–1165 threads the bilayer; the sequence is IILTLAMNITSTLQWAVNSSI. Residues 1166-1492 lie on the Cytoplasmic side of the membrane; that stretch reads DVDGLMRSVS…AEEDLQETRL (327 aa). One can recognise an ABC transporter 2 domain in the interval 1220 to 1453; the sequence is MMVNNLTAKY…ASLFKQVFGH (234 aa). Residues tyrosine 1229 and 1254–1261 contribute to the ATP site; that span reads GRTGAGKS. Basic residues predominate over residues 1465 to 1474; that stretch reads RNSSKRKTRP. The segment at 1465 to 1492 is disordered; it reads RNSSKRKTRPKISALQEEAEEDLQETRL. A compositionally biased stretch (acidic residues) spans 1481–1492; the sequence is EEAEEDLQETRL. The PDZ-binding signature appears at 1483-1485; the sequence is AEE.

Belongs to the ABC transporter superfamily. ABCC family. CFTR transporter (TC 3.A.1.202) subfamily. As to quaternary structure, monomer; does not require oligomerization for channel activity. May form oligomers in the membrane. Post-translationally, phosphorylated; cAMP treatment promotes phosphorylation and activates the channel. Dephosphorylation decreases the ATPase activity (in vitro). Phosphorylation at PKA sites activates the channel. Phosphorylation at PKC sites enhances the response to phosphorylation by PKA. In terms of tissue distribution, expressed in the rectal gland (at protein level).

Its subcellular location is the apical cell membrane. The protein resides in the early endosome membrane. It localises to the cell membrane. The protein localises to the recycling endosome membrane. It is found in the endoplasmic reticulum membrane. It catalyses the reaction ATP + H2O + closed Cl(-) channel = ADP + phosphate + open Cl(-) channel.. The enzyme catalyses chloride(in) = chloride(out). It carries out the reaction hydrogencarbonate(in) = hydrogencarbonate(out). The catalysed reaction is ATP + H2O = ADP + phosphate + H(+). Functionally, epithelial ion channel that plays an important role in the regulation of epithelial ion and water transport and fluid homeostasis. Mediates the transport of chloride ions across the cell membrane. Possesses an intrinsic ATPase activity and utilizes ATP to gate its channel; the passive flow of anions through the channel is gated by cycles of ATP binding and hydrolysis by the ATP-binding domains. The ion channel is also permeable to HCO(3)(-); selectivity depends on the extracellular chloride concentration. Exerts its function also by modulating the activity of other ion channels and transporters. Contributes to the regulation of the pH and the ion content of the epithelial fluid layer. This chain is Cystic fibrosis transmembrane conductance regulator, found in Squalus acanthias (Spiny dogfish).